Consider the following 165-residue polypeptide: Disulfide bond formation protein B (165 aa).

The Cytoplasmic segment spans residues 1 to 16 (MTILNSLNQFSKGRLS). The chain crosses the membrane as a helical span at residues 17–33 (WLLLLLFVVFFEACALY). Residues 34-51 (FQHVMMLAPCVMCIYERV) are Periplasmic-facing. Cysteines 43 and 46 form a disulfide. The chain crosses the membrane as a helical span at residues 52–67 (AMMGVGVAAIVGLMAP). Over 68–74 (NNPIFRW) the chain is Cytoplasmic. Residues 75 to 92 (LGLIGWGLSSYKGLLLAQ) form a helical membrane-spanning segment. Topologically, residues 93 to 147 (QHVDYQFNPSPFATCDLFVTFPSWRPLNQWAPWIFEAYGDCSKIVWQFLDLSMPQ) are periplasmic. Cysteines 107 and 133 form a disulfide. The helical transmembrane segment at 148-165 (WLVVIFAGNLIALALIVI) threads the bilayer.

It belongs to the DsbB family.

It localises to the cell inner membrane. Required for disulfide bond formation in some periplasmic proteins. Acts by oxidizing the DsbA protein. The chain is Disulfide bond formation protein B from Vibrio alginolyticus.